We begin with the raw amino-acid sequence, 438 residues long: tRNA-2-methylthio-N(6)-dimethylallyladenosine synthase (438 aa).

Positions 4-120 constitute an MTTase N-terminal domain; that stretch reads KKLYIDTVGC…VPEMVKDAEA (117 aa). [4Fe-4S] cluster is bound by residues C13, C49, C83, C158, C162, and C165. One can recognise a Radical SAM core domain in the interval 144 to 377; that stretch reads GRKRVSAFVT…QAVHSRIHNE (234 aa). The TRAM domain occupies 377 to 438; it reads ETYVGSTQQV…YANSLLGELL (62 aa).

Belongs to the methylthiotransferase family. MiaB subfamily. As to quaternary structure, monomer. It depends on [4Fe-4S] cluster as a cofactor.

It localises to the cytoplasm. The enzyme catalyses N(6)-dimethylallyladenosine(37) in tRNA + (sulfur carrier)-SH + AH2 + 2 S-adenosyl-L-methionine = 2-methylsulfanyl-N(6)-dimethylallyladenosine(37) in tRNA + (sulfur carrier)-H + 5'-deoxyadenosine + L-methionine + A + S-adenosyl-L-homocysteine + 2 H(+). Functionally, catalyzes the methylthiolation of N6-(dimethylallyl)adenosine (i(6)A), leading to the formation of 2-methylthio-N6-(dimethylallyl)adenosine (ms(2)i(6)A) at position 37 in tRNAs that read codons beginning with uridine. This chain is tRNA-2-methylthio-N(6)-dimethylallyladenosine synthase, found in Trichlorobacter lovleyi (strain ATCC BAA-1151 / DSM 17278 / SZ) (Geobacter lovleyi).